We begin with the raw amino-acid sequence, 275 residues long: Phosphite import ATP-binding protein PxtA (275 aa).

The region spanning 11 to 252 (LRVDRLSVVY…QLERIYAGRS (242 aa)) is the ABC transporter domain. Position 44–51 (44–51 (GLSGAGKS)) interacts with ATP. The segment at 251–275 (RSTTQPANAPAEPPVMLEPSLEMSR) is disordered.

This sequence belongs to the ABC transporter superfamily. Phosphonates importer (TC 3.A.1.9.1) family. In terms of assembly, the complex is composed of two ATP-binding proteins (PtxA), two transmembrane proteins (PtxC) and a solute-binding protein (PtxB).

It is found in the cell inner membrane. The enzyme catalyses phosphite(out) + ATP + H2O = phosphite(in) + ADP + phosphate + H(+). Functionally, part of the ABC transporter complex PtxABC involved in phosphite import. Responsible for energy coupling to the transport system. The polypeptide is Phosphite import ATP-binding protein PxtA (ptxA) (Stutzerimonas stutzeri (Pseudomonas stutzeri)).